Consider the following 252-residue polypeptide: 2-succinyl-6-hydroxy-2,4-cyclohexadiene-1-carboxylate synthase (252 aa).

The protein belongs to the AB hydrolase superfamily. MenH family. As to quaternary structure, monomer.

The enzyme catalyses 5-enolpyruvoyl-6-hydroxy-2-succinyl-cyclohex-3-ene-1-carboxylate = (1R,6R)-6-hydroxy-2-succinyl-cyclohexa-2,4-diene-1-carboxylate + pyruvate. The protein operates within quinol/quinone metabolism; 1,4-dihydroxy-2-naphthoate biosynthesis; 1,4-dihydroxy-2-naphthoate from chorismate: step 3/7. It participates in quinol/quinone metabolism; menaquinone biosynthesis. Catalyzes a proton abstraction reaction that results in 2,5-elimination of pyruvate from 2-succinyl-5-enolpyruvyl-6-hydroxy-3-cyclohexene-1-carboxylate (SEPHCHC) and the formation of 2-succinyl-6-hydroxy-2,4-cyclohexadiene-1-carboxylate (SHCHC). This is 2-succinyl-6-hydroxy-2,4-cyclohexadiene-1-carboxylate synthase from Salmonella enteritidis PT4 (strain P125109).